A 300-amino-acid polypeptide reads, in one-letter code: Ribosomal protein L11 methyltransferase (300 aa).

Residues threonine 147, glycine 168, aspartate 190, and asparagine 236 each coordinate S-adenosyl-L-methionine.

It belongs to the methyltransferase superfamily. PrmA family.

It is found in the cytoplasm. The catalysed reaction is L-lysyl-[protein] + 3 S-adenosyl-L-methionine = N(6),N(6),N(6)-trimethyl-L-lysyl-[protein] + 3 S-adenosyl-L-homocysteine + 3 H(+). In terms of biological role, methylates ribosomal protein L11. The sequence is that of Ribosomal protein L11 methyltransferase from Leptospira interrogans serogroup Icterohaemorrhagiae serovar Lai (strain 56601).